A 116-amino-acid polypeptide reads, in one-letter code: Iron-sulfur cluster insertion protein ErpA (116 aa).

Positions 44, 108, and 110 each coordinate iron-sulfur cluster.

Belongs to the HesB/IscA family. In terms of assembly, homodimer. Iron-sulfur cluster is required as a cofactor.

Required for insertion of 4Fe-4S clusters for at least IspG. This Francisella tularensis subsp. mediasiatica (strain FSC147) protein is Iron-sulfur cluster insertion protein ErpA.